Reading from the N-terminus, the 366-residue chain is MEGLRRHSVMLDCKLWKDDPIYFFKTLPPYISKYAQRADDASIQAQIDVFGKDDVGAMPGALGPRGNFAAVTFAESFPDRVAMLAYLNEVLSFYECFEKQMTEMLDATLYANPVPKDPKYDNPVWQANYKNTMTKWPKILENLDPKLGPKCVKSLVALVEGTDMEPKMAHYKTMKEYALDRTNYIAWPVACDNAEFGSQLNLTQDQLDSVRDIFLPLWTHSCYVYDYYHYDKEAEIHSTYGKGRSMINSIPLLNRLKGLSVEEAKAWLKQRCFELEKEYLQRKEDYFSENPVEAVPVDLRRWFLSQEDLATGFAIWCATTYHNHPPFGEGYAAPYEKRRKEGALWFEKVTESDQLMTGGFEVRYAN.

The protein belongs to the terpene synthase family. As to quaternary structure, homodimer.

The enzyme catalyses N,N-dimethyl-cadaverine + 2,6,9-trimethyl-13-oxatetracyclo[6.3.1.1(6,9).0(1,5)]tridecane carbocation = pre-flavunoidine + H(+). Its pathway is secondary metabolite biosynthesis; terpenoid biosynthesis. Terpene cyclase-like protein; part of the gene cluster that mediates the biosynthesis of flavunoidine, an alkaloidal terpenoid with a tetracyclic cage-like core connected to dimethylcadaverine via a C-N bond and acylated with 5,5-dimethyl-L-pipecolate. The tetracyclic core is synthesized by the terpene cyclase flvE and the cytochrome P450 monooxygenase flvD. The terpene cyclase flvE catalyzes the cyclization of farnesyl pyrophosphate (FPP) to form (1R,4R,5S)-(+)-acoradiene and the cytochrome P450 monooxygenase flvD is then responsible for oxidative conversion of (1R,4R,5S)-(+)-acoradiene into the tetracyclic cage present in the final product flavunoidine. In parallel, the N-methyltransferase flvH dimethylates L-lysine to give N,N-dimethyl-L-Lysin which is decarboxylated by flvG to afford dimethylcadaverine. The terpene cyclase-like protein flvF is the enzyme that attaches the dimethylcadaverine precusor at the C-7 of the tetracyclic cage to yield pre-flavunoidine. The cytochrome monooxygenase flvC hydroxylates the C-10 position of pre-flavunoidine whereas the NRPS flvI acylates the terpenoid core at the hydroxylated C-10 with dimethylpipecolate to yield final flavunoidine. The bifunctional enzyme flvA and the dehydrogenase flvB are responsible for the synthesis of the dimethylpipecolate precursor. The PLP-dependent lyase domain of flvA might use L-O-acetyl-homoserine and alpha-keto-isovalerate to form an intermediary ketone that can cyclize intramolecularly to yield an imine. The imine can be reduced by flvB to yield the 6-carboxylated pipecolate. The C-terminal alpha-KG-dependent oxygenase domain of flvA is then proposed to catalyze the decarboxylation to yield dimethylpipecolate. The polypeptide is Terpene cyclase-like protein flvF (Aspergillus flavus (strain ATCC 200026 / FGSC A1120 / IAM 13836 / NRRL 3357 / JCM 12722 / SRRC 167)).